An 84-amino-acid polypeptide reads, in one-letter code: Small ribosomal subunit protein bS18 (84 aa).

The protein belongs to the bacterial ribosomal protein bS18 family. As to quaternary structure, part of the 30S ribosomal subunit. Forms a tight heterodimer with protein bS6.

Binds as a heterodimer with protein bS6 to the central domain of the 16S rRNA, where it helps stabilize the platform of the 30S subunit. This chain is Small ribosomal subunit protein bS18, found in Maricaulis maris (strain MCS10) (Caulobacter maris).